Reading from the N-terminus, the 132-residue chain is Minor structural pilin EpdB (132 aa).

Positions 1–4 (MSKG) are excised as a propeptide. The short motif at 9 to 19 (EFIVLFLALLV) is the QXSXEXXXL element.

The N-terminus is probably cleaved by the prepilin peptidase EppA, which recognizes the class III signal sequence.

It is found in the secreted. It localises to the cell surface. The protein resides in the fimbrium. Minor component of the type IV-like pili. Essential for pili formation. The chain is Minor structural pilin EpdB from Methanococcus maripaludis (strain DSM 14266 / JCM 13030 / NBRC 101832 / S2 / LL).